Reading from the N-terminus, the 236-residue chain is Snake venom serine protease pallase (236 aa).

Residues 1-227 enclose the Peptidase S1 domain; it reads VIGGDECNIN…HLDWIENIIA (227 aa). 6 cysteine pairs are disulfide-bonded: C7–C139, C26–C42, C74–C234, C118–C188, C150–C167, and C178–C203. Residues H41 and D86 each act as charge relay system in the active site. Catalysis depends on S182, which acts as the Charge relay system.

It belongs to the peptidase S1 family. Snake venom subfamily. Monomer. As to expression, expressed by the venom gland.

It is found in the secreted. In terms of biological role, snake venom serine protease that may act in the hemostasis system of the prey. This is Snake venom serine protease pallase from Gloydius halys (Chinese water mocassin).